A 452-amino-acid polypeptide reads, in one-letter code: cAMP/cGMP-dependent 3',5'-cAMP/cGMP phosphodiesterase A (452 aa).

Residues 1–23 form the signal peptide; sequence MALNKKLISLLLLIFIILNIVNS. The propeptide occupies 24–49; that stretch reads HQQEDCDDDDEDIGISAERSERRSVK. N-linked (GlcNAc...) asparagine glycosylation is found at N101, N141, and N277.

It belongs to the cyclic nucleotide phosphodiesterase class-II family.

The protein localises to the secreted. Its subcellular location is the extracellular space. It is found in the cell surface. It catalyses the reaction 3',5'-cyclic AMP + H2O = AMP + H(+). The enzyme catalyses 3',5'-cyclic GMP + H2O = GMP + H(+). Inhibited by dithiotreitol (DTT). Functionally, phosphodiesterase which displays a preference for cAMP over cGMP. Involved in the degradation of extracellular cAMP. Maintains the responsiveness of cells to the chemoattractant cAMP during the aggregation phase of development. The protein is cAMP/cGMP-dependent 3',5'-cAMP/cGMP phosphodiesterase A (pdsA) of Dictyostelium discoideum (Social amoeba).